A 468-amino-acid polypeptide reads, in one-letter code: Sorting and assembly machinery component 50 homolog (468 aa).

Positions 1-24 (MGTVHARSLDPLPMNGPDFGSHDD) are disordered. The 81-residue stretch at 44–124 (VVVQRVHFEG…LDVTFEVTEL (81 aa)) folds into the POTRA domain.

Belongs to the SAM50/omp85 family. Associates with the mitochondrial contact site and cristae organizing system (MICOS) complex (also known as MINOS or MitOS complex).

The protein resides in the mitochondrion outer membrane. Its function is as follows. May play a role in the maintenance of the structure of mitochondrial cristae. This chain is Sorting and assembly machinery component 50 homolog (samm50), found in Xenopus tropicalis (Western clawed frog).